We begin with the raw amino-acid sequence, 237 residues long: Ribonuclease PH (237 aa).

Phosphate contacts are provided by residues Arg-86 and 124-126 (GTR).

The protein belongs to the RNase PH family. As to quaternary structure, homohexameric ring arranged as a trimer of dimers.

The enzyme catalyses tRNA(n+1) + phosphate = tRNA(n) + a ribonucleoside 5'-diphosphate. In terms of biological role, phosphorolytic 3'-5' exoribonuclease that plays an important role in tRNA 3'-end maturation. Removes nucleotide residues following the 3'-CCA terminus of tRNAs; can also add nucleotides to the ends of RNA molecules by using nucleoside diphosphates as substrates, but this may not be physiologically important. Probably plays a role in initiation of 16S rRNA degradation (leading to ribosome degradation) during starvation. The chain is Ribonuclease PH from Idiomarina loihiensis (strain ATCC BAA-735 / DSM 15497 / L2-TR).